The chain runs to 334 residues: O-methyltransferase SfmM3 (334 aa).

Residues Asp-190 and 216–218 each bind S-adenosyl-L-methionine; that span reads GDF. His-236 serves as the catalytic Proton acceptor.

Belongs to the class I-like SAM-binding methyltransferase superfamily. Cation-independent O-methyltransferase family. COMT subfamily.

The enzyme catalyses 5-hydroxy-3-methyl-L-tyrosine + S-adenosyl-L-methionine = 5-hydroxy-3-methyl-O-methyl-L-tyrosine + S-adenosyl-L-homocysteine + H(+). It participates in antibiotic biosynthesis. Functionally, O-methyltransferase that mediates the methylation of 3-hydroxy-5-methyl-L-tyrosine (3-OH-5-Me-Tyr) into 3-hydroxy-5-methyl-O-methyltyrosine (3-OH-5-Me-OMe-Tyr), a core structure of saframycin A, a potent antitumor antibiotic that belongs to the tetrahydroisoquinoline family. In Streptomyces lavendulae, this protein is O-methyltransferase SfmM3.